The following is a 254-amino-acid chain: Aspartate/glutamate leucyltransferase (254 aa).

It belongs to the R-transferase family. Bpt subfamily.

Its subcellular location is the cytoplasm. The enzyme catalyses N-terminal L-glutamyl-[protein] + L-leucyl-tRNA(Leu) = N-terminal L-leucyl-L-glutamyl-[protein] + tRNA(Leu) + H(+). The catalysed reaction is N-terminal L-aspartyl-[protein] + L-leucyl-tRNA(Leu) = N-terminal L-leucyl-L-aspartyl-[protein] + tRNA(Leu) + H(+). Functions in the N-end rule pathway of protein degradation where it conjugates Leu from its aminoacyl-tRNA to the N-termini of proteins containing an N-terminal aspartate or glutamate. The polypeptide is Aspartate/glutamate leucyltransferase (Xylella fastidiosa (strain 9a5c)).